Consider the following 1369-residue polypeptide: MutS protein homolog 5 (1369 aa).

The disordered stretch occupies residues 138-190 (IYEDGTTEEGTSEDTVPTWDSSLAYSTDETTAEKEEKEEDEDDDDEGLPAKLN). Positions 173 to 184 (EKEEDEDDDDEG) are enriched in acidic residues. 639-646 (GPNACGKS) contacts ATP. Disordered regions lie at residues 880 to 915 (SMRN…SVLS), 935 to 1135 (KKKK…RSSN), 1153 to 1182 (LKSQ…HSQN), and 1248 to 1278 (NFIF…SSIS). Basic and acidic residues predominate over residues 884 to 894 (VSEEIEKERSE). Polar residues-rich tracts occupy residues 895–915 (ASTP…SVLS) and 941–950 (TGSSMESSMS). Acidic residues predominate over residues 954-967 (FQEEDEGTEGEEDQ). Over residues 991–1003 (QSINSRHSFSTRT) the composition is skewed to polar residues. The span at 1024-1037 (STSTSSPGPSASKS) shows a compositional bias: low complexity. Over residues 1049-1065 (VKESQVLETPKQLSISS) the composition is skewed to polar residues. Over residues 1073 to 1084 (SSEKDVISRVSE) the composition is skewed to basic and acidic residues. Composition is skewed to polar residues over residues 1111–1124 (KNRS…QSAR) and 1153–1167 (LKSQ…TPRS). Basic and acidic residues predominate over residues 1254-1263 (PEPRSSEKQR).

Belongs to the DNA mismatch repair MutS family. As to quaternary structure, heterooligomer of him-14 and msh-5. Interacts with the brc-1-brd-1 heterodimer. Expressed in the germline.

Its subcellular location is the chromosome. Crucial component in meiotic recombination, functioning at some point after the initiation step of recombination. Plays a role in promoting the crossover outcome of meiotic recombination events. Required for formation of normal meiotic crossover, and crossover and chiasmata generated by artificially made DNA breaks. Together with him-14 and zhp-3 plays a role in the activation of DNA damage-dependent apoptosis at the DNA damage checkpoint in pachytene cells. In Caenorhabditis elegans, this protein is MutS protein homolog 5.